The sequence spans 179 residues: Large ribosomal subunit protein bL9 (179 aa).

Residues 156–179 (PEGAPVPVAEEPAAEAEQAEVAAE) form a disordered region. Positions 157-166 (EGAPVPVAEE) are enriched in low complexity. Over residues 167–179 (PAAEAEQAEVAAE) the composition is skewed to acidic residues.

It belongs to the bacterial ribosomal protein bL9 family.

Functionally, binds to the 23S rRNA. This chain is Large ribosomal subunit protein bL9, found in Porphyromonas gingivalis (strain ATCC 33277 / DSM 20709 / CIP 103683 / JCM 12257 / NCTC 11834 / 2561).